A 254-amino-acid polypeptide reads, in one-letter code: Ribosomal RNA small subunit methyltransferase G (254 aa).

Residues 1-21 (MPEGDGVPRETPSPSVVPESP) are disordered. Residues 9–21 (RETPSPSVVPESP) are compositionally biased toward low complexity. Residues Gly90, Leu95, 142–143 (AE), and Arg157 contribute to the S-adenosyl-L-methionine site. Residues 230–254 (GPLRAATAPAPPGAAKRRPGKGNRR) form a disordered region. The segment covering 244 to 254 (AKRRPGKGNRR) has biased composition (basic residues).

It belongs to the methyltransferase superfamily. RNA methyltransferase RsmG family.

The protein localises to the cytoplasm. In terms of biological role, specifically methylates the N7 position of guanine in position 518 of 16S rRNA. The polypeptide is Ribosomal RNA small subunit methyltransferase G (Kineococcus radiotolerans (strain ATCC BAA-149 / DSM 14245 / SRS30216)).